The chain runs to 153 residues: Bacteriohemerythrin (153 aa).

Positions 21, 57, 61, 76, 80, 115, and 120 each coordinate Fe cation.

This sequence belongs to the hemerythrin family. As to quaternary structure, monomer.

In terms of biological role, oxygen-binding protein. May be involved in a storage mechanism or for delivery to oxygen-requiring enzymes. The oxygen-binding site contains two iron atoms. This is Bacteriohemerythrin from Pseudomonas paraeruginosa (strain DSM 24068 / PA7) (Pseudomonas aeruginosa (strain PA7)).